The following is a 65-amino-acid chain: MPKMKTKKSASKRFTARPNGSFKRGQAFKRHILTKKTTKNKRHLRGTQDVHETNLKSVRAMMPYA.

Positions 1–15 (MPKMKTKKSASKRFT) are enriched in basic residues. A disordered region spans residues 1 to 27 (MPKMKTKKSASKRFTARPNGSFKRGQA).

The protein belongs to the bacterial ribosomal protein bL35 family.

The chain is Large ribosomal subunit protein bL35 from Cupriavidus pinatubonensis (strain JMP 134 / LMG 1197) (Cupriavidus necator (strain JMP 134)).